A 295-amino-acid chain; its full sequence is Small ribosomal subunit protein uS2 (295 aa).

It belongs to the universal ribosomal protein uS2 family.

The chain is Small ribosomal subunit protein uS2 from Rickettsia canadensis (strain McKiel).